The chain runs to 253 residues: Methionine aminopeptidase A (253 aa).

His80 contacts substrate. Residues Asp98, Asp109, and His172 each contribute to the a divalent metal cation site. His179 is a binding site for substrate. Residues Glu205 and Glu236 each contribute to the a divalent metal cation site.

It belongs to the peptidase M24A family. Methionine aminopeptidase type 1 subfamily. Monomer. It depends on Co(2+) as a cofactor. Zn(2+) serves as cofactor. The cofactor is Mn(2+). Requires Fe(2+) as cofactor.

The catalysed reaction is Release of N-terminal amino acids, preferentially methionine, from peptides and arylamides.. Its function is as follows. Removes the N-terminal methionine from nascent proteins. The N-terminal methionine is often cleaved when the second residue in the primary sequence is small and uncharged (Met-Ala-, Cys, Gly, Pro, Ser, Thr, or Val). Requires deformylation of the N(alpha)-formylated initiator methionine before it can be hydrolyzed. The protein is Methionine aminopeptidase A of Synechocystis sp. (strain ATCC 27184 / PCC 6803 / Kazusa).